Reading from the N-terminus, the 339-residue chain is 5-dehydro-2-deoxygluconokinase (339 aa).

It belongs to the carbohydrate kinase PfkB family.

The enzyme catalyses 5-dehydro-2-deoxy-D-gluconate + ATP = 6-phospho-5-dehydro-2-deoxy-D-gluconate + ADP + H(+). The protein operates within polyol metabolism; myo-inositol degradation into acetyl-CoA; acetyl-CoA from myo-inositol: step 5/7. Functionally, catalyzes the phosphorylation of 5-dehydro-2-deoxy-D-gluconate (2-deoxy-5-keto-D-gluconate or DKG) to 6-phospho-5-dehydro-2-deoxy-D-gluconate (DKGP). The polypeptide is 5-dehydro-2-deoxygluconokinase (Clostridium beijerinckii (strain ATCC 51743 / NCIMB 8052) (Clostridium acetobutylicum)).